Here is a 103-residue protein sequence, read N- to C-terminus: Histone H4 (103 aa).

Gly residues predominate over residues 1–14 (MSGRGKGGKGLGKG). The segment at 1-20 (MSGRGKGGKGLGKGGAKRHR) is disordered. The DNA-binding element occupies 17–21 (KRHRK).

The protein belongs to the histone H4 family. As to quaternary structure, the nucleosome is a histone octamer containing two molecules each of H2A, H2B, H3 and H4 assembled in one H3-H4 heterotetramer and two H2A-H2B heterodimers. The octamer wraps approximately 147 bp of DNA.

It localises to the nucleus. Its subcellular location is the chromosome. Functionally, core component of nucleosome. Nucleosomes wrap and compact DNA into chromatin, limiting DNA accessibility to the cellular machineries which require DNA as a template. Histones thereby play a central role in transcription regulation, DNA repair, DNA replication and chromosomal stability. DNA accessibility is regulated via a complex set of post-translational modifications of histones, also called histone code, and nucleosome remodeling. This is Histone H4 (H41) from Physarum polycephalum (Slime mold).